Consider the following 206-residue polypeptide: Platelet glycoprotein Ib beta chain (206 aa).

The signal sequence occupies residues Met1–Cys26. Cystine bridges form between Cys26/Cys32 and Cys30/Cys39. The LRRNT domain maps to Pro27–Pro55. Topologically, residues Pro27 to Ala150 are extracellular. The LRR repeat unit spans residues Leu60–Arg83. Residues Asn89–Pro143 enclose the LRRCT domain. Intrachain disulfides connect Cys93-Cys118 and Cys95-Cys141. A helical membrane pass occupies residues Leu151–Leu171. Over Leu172–Ser206 the chain is Cytoplasmic. The residue at position 186 (Ser186) is a Phosphoserine. Ser191 is modified (phosphoserine; by PKA). Thr193 is modified (phosphothreonine). A Phosphoserine modification is found at Ser200.

In terms of assembly, two GP-Ib beta are disulfide-linked to one GP-Ib alpha. GP-IX is complexed with the GP-Ib heterodimer via a non covalent linkage. Interacts with TRAF4.

It localises to the membrane. In terms of biological role, gp-Ib, a surface membrane protein of platelets, participates in the formation of platelet plugs by binding to von Willebrand factor, which is already bound to the subendothelium. The polypeptide is Platelet glycoprotein Ib beta chain (Gp1bb) (Rattus norvegicus (Rat)).